Consider the following 108-residue polypeptide: DNA-binding protein HBbu (108 aa).

This sequence belongs to the bacterial histone-like protein family.

Histone-like DNA-binding protein which is capable of wrapping DNA to stabilize it, and thus to prevent its denaturation under extreme environmental conditions. This is DNA-binding protein HBbu (hbb) from Borrelia turicatae.